A 135-amino-acid polypeptide reads, in one-letter code: Cytochrome c2 (135 aa).

The signal sequence occupies residues 1–23; it reads MKKGFLAAGVFAAVAFASGAALA. Heme c contacts are provided by Cys37, Cys40, His41, and Met114.

It belongs to the cytochrome c family. In terms of processing, binds 1 heme c group covalently per subunit.

Cytochrome c2 is found mainly in purple, non-sulfur, photosynthetic bacteria where it functions as the electron donor to the oxidized bacteriochlorophyll in the photophosphorylation pathway. However, it may also have a role in the respiratory chain and is found in some non-photosynthetic bacteria. This chain is Cytochrome c2 (cycA), found in Rhodospirillum rubrum (strain ATCC 11170 / ATH 1.1.1 / DSM 467 / LMG 4362 / NCIMB 8255 / S1).